Here is a 97-residue protein sequence, read N- to C-terminus: Mitochondrial import inner membrane translocase subunit Tim8 A (97 aa).

A Twin CX3C motif motif is present at residues 43–66; that stretch reads CWEKCMDKPGPKLDSRAEACFVNC. Disulfide bonds link cysteine 43–cysteine 66 and cysteine 47–cysteine 62. A phosphoserine mark is found at serine 57, serine 87, serine 94, and serine 96.

This sequence belongs to the small Tim family. In terms of assembly, heterohexamer; composed of 3 copies of TIMM8A and 3 copies of TIMM13, named soluble 70 kDa complex. Associates with the TIM22 complex, whose core is composed of TIMM22. Present at high level in liver and brain, and at lower level in muscle and heart. In CNS sections, it is predominantly present in the soma and the dendritic portion of the Purkinje cells of the cerebellum, but not in the glial cells. Scattered expression also is also detected in the brain stem, olfactory bulb, substantia nigra, hippocampus and striatum (at protein level). Ubiquitously expressed.

It localises to the mitochondrion inner membrane. Mitochondrial intermembrane chaperone that participates in the import and insertion of some multi-pass transmembrane proteins into the mitochondrial inner membrane. Also required for the transfer of beta-barrel precursors from the TOM complex to the sorting and assembly machinery (SAM complex) of the outer membrane. Acts as a chaperone-like protein that protects the hydrophobic precursors from aggregation and guide them through the mitochondrial intermembrane space. The TIMM8-TIMM13 complex mediates the import of proteins such as TIMM23, SLC25A12/ARALAR1 and SLC25A13/ARALAR2, while the predominant TIMM9-TIMM10 70 kDa complex mediates the import of much more proteins. The chain is Mitochondrial import inner membrane translocase subunit Tim8 A (Timm8a1) from Mus musculus (Mouse).